Reading from the N-terminus, the 975-residue chain is GPI inositol-deacylase (975 aa).

The chain crosses the membrane as a helical span at residues 27–47; that stretch reads STLVIIVGLLLLCIITSTHIS. The N-linked (GlcNAc...) asparagine glycan is linked to N49. S210 is a catalytic residue. N-linked (GlcNAc...) asparagine glycosylation is found at N276, N384, N407, N419, and N488. A helical membrane pass occupies residues 655-675; that stretch reads LAFASIPISIIALVLCYQFYY. N696 is a glycosylation site (N-linked (GlcNAc...) asparagine). 3 helical membrane-spanning segments follow: residues 699–719, 751–771, and 818–838; these read LLIF…AILT, FVWW…FIIL, and VCFI…FILV. N867 carries N-linked (GlcNAc...) asparagine glycosylation. The next 3 membrane-spanning stretches (helical) occupy residues 868–888, 932–952, and 955–975; these read VSFL…VVVF, NWLI…MYGI, and LYWV…LTIL.

It belongs to the GPI inositol-deacylase family.

The protein resides in the endoplasmic reticulum membrane. In terms of biological role, involved in inositol deacylation of GPI-anchored proteins which plays important roles in the quality control and ER-associated degradation of GPI-anchored proteins. In Kluyveromyces lactis (strain ATCC 8585 / CBS 2359 / DSM 70799 / NBRC 1267 / NRRL Y-1140 / WM37) (Yeast), this protein is GPI inositol-deacylase (BST1).